Reading from the N-terminus, the 81-residue chain is Sulfur carrier protein TusA (81 aa).

C19 serves as the catalytic Cysteine persulfide intermediate.

Belongs to the sulfur carrier protein TusA family.

The protein localises to the cytoplasm. Its function is as follows. Sulfur carrier protein which probably makes part of a sulfur-relay system. The polypeptide is Sulfur carrier protein TusA (Vibrio vulnificus (strain CMCP6)).